The following is a 376-amino-acid chain: Cytochrome-c peroxidase IdrP1 (376 aa).

The N-terminal stretch at Met1 to Ala24 is a signal peptide. 2 Cytochrome c domains span residues Asp49–Lys157 and Ala203–Ser354. The heme c site is built by Cys71, Cys74, His75, Cys218, Cys221, and His222.

In terms of assembly, the iodate reductase (Idr) complex is composed of a molybdopterin-dependent iodate reductase (IdrA and IdrB subunits) and two associated peroxidases (IdrP1 and IdrP2). It depends on heme c as a cofactor.

It localises to the periplasm. It carries out the reaction 2 Fe(II)-[cytochrome c] + H2O2 + 2 H(+) = 2 Fe(III)-[cytochrome c] + 2 H2O. Involved in iodate respiration. May play a critical role in detoxification of inadvertent H(2)O(2) generated by the iodate reductase IdrA/IdrB. The polypeptide is Cytochrome-c peroxidase IdrP1 (Denitromonas iodatirespirans).